The chain runs to 381 residues: Putative steryl acetyl hydrolase mug81 (381 aa).

At 1 to 9 (MISLSLLYR) the chain is on the cytoplasmic side. A helical; Signal-anchor for type II membrane protein membrane pass occupies residues 10 to 30 (ILTLPIILVGTTILYFTIGTN). Over 31 to 381 (FPHDELRHNL…YTFLRETFEE (351 aa)) the chain is Lumenal. The short motif at 125 to 127 (HGG) is the Involved in the stabilization of the negatively charged intermediate by the formation of the oxyanion hole element. An N-linked (GlcNAc...) asparagine glycan is attached at asparagine 193. Residue serine 200 is part of the active site.

Belongs to the 'GDXG' lipolytic enzyme family.

It is found in the cytoplasm. It localises to the endoplasmic reticulum membrane. Its function is as follows. Required for the deacetylation of acetylated sterols. Has a role in meiosis. In Schizosaccharomyces pombe (strain 972 / ATCC 24843) (Fission yeast), this protein is Putative steryl acetyl hydrolase mug81 (mug180).